The chain runs to 724 residues: RINT1-like protein (724 aa).

Residues 163–724 (RLHAVQAQSL…LERRMDIKMF (562 aa)) enclose the RINT1/TIP20 domain.

The protein belongs to the RINT1 family.

Its function is as follows. During cytokinesis in male meiotic cells, required for completion of cleavage furrow ingression possibly in conjunction with Zw10. Required for maintenance of Golgi stack number and morphology. Essential for acroblast assembly. The polypeptide is RINT1-like protein (Drosophila melanogaster (Fruit fly)).